Consider the following 305-residue polypeptide: Carbonic anhydrase 5A, mitochondrial (305 aa).

The transit peptide at 1 to 38 (MLGRNTWKTSAFSFLVEQMWAPLWSRSMRPGRWCSQRS) directs the protein to the mitochondrion. The Alpha-carbonic anhydrase domain maps to 39–296 (CAWQTSNNTL…LMNRKVWASF (258 aa)). Residues histidine 130, histidine 132, and histidine 155 each coordinate Zn(2+).

The protein belongs to the alpha-carbonic anhydrase family. It depends on Zn(2+) as a cofactor.

The protein localises to the mitochondrion. The enzyme catalyses hydrogencarbonate + H(+) = CO2 + H2O. Its activity is regulated as follows. Activated by L- and D-histidine. Activated by L- and D-phenylalanine. Activated by L-adrenaline. Inhibited by coumarins, sulfonamide derivatives such as acetazolamide and Foscarnet (phosphonoformate trisodium salt). Activated by histamine. Its function is as follows. Mitochondrial carbonic anhydrase that catalyzes the reversible conversion of carbon dioxide to bicarbonate/HCO3. Mitochondria are impermeable to HCO3, and thus this intramitochondrial carbonic anhydrase is pivotal in providing HCO3 for multiple mitochondrial enzymes that catalyze the formation of essential metabolites of intermediary metabolism in the urea and Krebs cycles. This is Carbonic anhydrase 5A, mitochondrial from Homo sapiens (Human).